The sequence spans 146 residues: Single-stranded DNA-binding protein, mitochondrial (146 aa).

The N-terminal 22 residues, 1–22 (MQHTRRMLNPLLTGLRNLPARG), are a transit peptide targeting the mitochondrion. Residues 38–142 (VNTVTILGRV…IIADDVLFFR (105 aa)) enclose the SSB domain.

As to quaternary structure, homotetramer. As to expression, uniformly distributed in the early embryo. High levels detected in the anterior and posterior midgut primordia of stage 12 embryos. In larvae, high levels were detected in proliferating tissues including the CNS and digestive tract. In adults, highly expressed in the CNS, digestive tract and ovary.

The protein localises to the mitochondrion. Functionally, binds preferentially and cooperatively to pyrimidine rich single-stranded DNA (ss-DNA). Required to maintain the copy number of mitochondrial DNA (mtDNA) and plays crucial roles during mtDNA replication that stimulate activity of the gamma complex polymerase PolG1/tam at the replication fork. Promotes PolG1 activity largely by organizing the template DNA and eliminating secondary structures to favor ss-DNA conformations that facilitate PolG1 activity. The sequence is that of Single-stranded DNA-binding protein, mitochondrial (mtSSB) from Drosophila melanogaster (Fruit fly).